Reading from the N-terminus, the 656-residue chain is Phosphoprotein 85 (656 aa).

Disordered regions lie at residues 1 to 174 (MSSR…EGDE) and 615 to 656 (NGNH…EYCC). A compositionally biased stretch (basic and acidic residues) spans 46–55 (SATEDLDRME). Composition is skewed to low complexity over residues 59 to 70 (SPYSVSSDAPSS) and 140 to 160 (DNSSSGGSSSRTTSNSSRSTS). A compositionally biased stretch (pro residues) spans 625–634 (SPPPPLPPRD). The span at 635–656 (YPQRDERDRHRRDRRDSGEYCC) shows a compositional bias: basic and acidic residues.

It belongs to the herpesviridae pp85 family. Phosphorylated.

It localises to the virion tegument. The protein localises to the host cytoplasm. The chain is Phosphoprotein 85 (UL25) from Homo sapiens (Human).